The sequence spans 445 residues: FAS-associated factor 2 (445 aa).

Residues 12–53 (EQTEKLLQFQDLTGIESMDQCRQTLQQHNWNIEAAVQDRLNE) form the UBA domain. Residues 275–353 (SERLEREERN…ERKSECLPAE (79 aa)) are a coiled coil. Residues 303–348 (ADQEKERKKKEKQEQKRREEEEAQLKQMLEERKKRNLEEEKERKSE) are compositionally biased toward basic and acidic residues. The tract at residues 303-354 (ADQEKERKKKEKQEQKRREEEEAQLKQMLEERKKRNLEEEKERKSECLPAEP) is disordered. In terms of domain architecture, UBX spans 357–439 (DHPDNVKIIF…GLSQSQLLFV (83 aa)).

Its subcellular location is the cytoplasm. The protein localises to the lipid droplet. The protein resides in the endoplasmic reticulum. Its function is as follows. Plays an important role in endoplasmic reticulum-associated degradation (ERAD) that mediates ubiquitin-dependent degradation of misfolded endoplasmic reticulum proteins. Involved in inhibition of lipid droplet degradation. Involved in stress granule disassembly. This is FAS-associated factor 2 (faf2) from Xenopus tropicalis (Western clawed frog).